The primary structure comprises 232 residues: Rho-related GTP-binding protein Rho6 (232 aa).

Residues 23-28 (QCGKTA), 38-45 (YPETYVPT), 67-71 (DTSGS), 125-128 (CKTD), and 169-170 (AF) each bind GTP. The short motif at 42 to 50 (YVPTVFENY) is the Effector region element. Position 229 is a cysteine methyl ester (cysteine 229). The S-geranylgeranyl cysteine moiety is linked to residue cysteine 229. Residues 230-232 (SIM) constitute a propeptide, removed in mature form.

Belongs to the small GTPase superfamily. Rho family. In terms of assembly, binds GRB7 and PLXNB1. Interacts with UBXD5. Interacts with PLXNA2. Mostly expressed in brain and liver.

It is found in the cell membrane. The protein resides in the cytoplasm. Its subcellular location is the cytoskeleton. Functionally, lacks intrinsic GTPase activity. Has a low affinity for GDP, and constitutively binds GTP. Controls rearrangements of the actin cytoskeleton. Induces the Rac-dependent neuritic process formation in part by disruption of the cortical actin filaments. Causes the formation of many neuritic processes from the cell body with disruption of the cortical actin filaments. The sequence is that of Rho-related GTP-binding protein Rho6 (RND1) from Homo sapiens (Human).